Consider the following 160-residue polypeptide: METEKPNTDVKVAQDLEKLKLDEKHKDEKKDKKDKKDKKDKKDKKEKTPEEIEAKRLKKEAKNKDKTPEELEAKRLKKEAKNKDKTPEELEAKRLKKEAKEKSKLEGKKDKDHKDEGKKDKKDKDHKDKDHKDEGKKDKKDKEHKDEGKKDKKDKEHKKE.

Over residues 1 to 31 the composition is skewed to basic and acidic residues; it reads METEKPNTDVKVAQDLEKLKLDEKHKDEKKD. The segment at 1–160 is disordered; sequence METEKPNTDV…DKKDKEHKKE (160 aa). Residues 20–111 are a coiled coil; the sequence is KLDEKHKDEK…KSKLEGKKDK (92 aa). A compositionally biased stretch (basic residues) spans 32–42; that stretch reads KKDKKDKKDKK. Positions 43 to 160 are enriched in basic and acidic residues; it reads DKKEKTPEEI…DKKDKEHKKE (118 aa).

This is an uncharacterized protein from Dictyostelium discoideum (Social amoeba).